The primary structure comprises 37 residues: Large ribosomal subunit protein bL36 (37 aa).

This sequence belongs to the bacterial ribosomal protein bL36 family.

The protein is Large ribosomal subunit protein bL36 of Geobacter metallireducens (strain ATCC 53774 / DSM 7210 / GS-15).